The sequence spans 449 residues: MHRMFGTDGVRGIANKELTPELAYKLGKAGAYVLTGRCHKPKILVGMDTRISGDMLENALVSGILSIGAEAICVGIVPTPAVAYLTRKYNADAGVVISASHNPVEYNGIKFFNGKGYKLSDELEDKIQYVIESNFKDVSIPIGSKVGRKIMETGEARKAYIEFAKSTIDTDLKDLKVVLDCANGASYVTSVKAFQELGAKVKVINNEPDGININHNCGSTHPENLMKTVVEEGYDMGLAFDGDADRCLAIDEKGNLINGDFIMAIIAKHLKNQGKLYKNVVVSTVMSNVGFDIALKEEGINTIKTQVGDRYVLEEMRKEGYKLGGEQSGHIIMLDYNTTGDGLITALQIACIVKKSGRKLSDIASMMKNLPQTLVNAKVPDDKKKIYMEDEEIVLKIKEIERKLHGCGRVLIRPSGTEPLVRVMLEGEEQGEIDKMAHNLAELIEVKLN.

Serine 100 acts as the Phosphoserine intermediate in catalysis. Mg(2+)-binding residues include serine 100, aspartate 241, aspartate 243, and aspartate 245. Serine 100 bears the Phosphoserine mark.

Belongs to the phosphohexose mutase family. Mg(2+) serves as cofactor. Post-translationally, activated by phosphorylation.

It carries out the reaction alpha-D-glucosamine 1-phosphate = D-glucosamine 6-phosphate. Functionally, catalyzes the conversion of glucosamine-6-phosphate to glucosamine-1-phosphate. This is Phosphoglucosamine mutase from Clostridium kluyveri (strain NBRC 12016).